The sequence spans 191 residues: Outer membrane lipoprotein DolP (191 aa).

Residues 1 to 18 (MKAFSPLAVLISALLLQG) form the signal peptide. Cysteine 19 carries the N-palmitoyl cysteine lipid modification. A lipid anchor (S-diacylglycerol cysteine) is attached at cysteine 19. BON domains follow at residues 46–115 (DDGT…RQGQ) and 124–191 (NDTW…TYIK).

This sequence belongs to the lipoprotein DolP family.

It is found in the cell outer membrane. Plays an important role in maintaining outer membrane integrity. Contributes to virulence. This is Outer membrane lipoprotein DolP from Salmonella typhimurium (strain LT2 / SGSC1412 / ATCC 700720).